The primary structure comprises 74 residues: uncharacterized protein (74 aa).

The disordered stretch occupies residues 39-74; that stretch reads SSPQAPGTLKPRALVRPSPGPVQENHLSEAQFPPKL.

This is an uncharacterized protein from Homo sapiens (Human).